The chain runs to 385 residues: MKKAVHFGAGNIGRGFIGEILSKNGFDIHFVDTNKSIIAELNNRHSYEIGIASSEHEKISVKAVSGINNSENPEAVIEAIAKADILTTAIGPNVLPYIAELIAKGLQKRKEEKVQSPLDIIACENMIGGSEFLEEKVSDYLSESDKLYLSKFIGFPNAAVDRIVPAQKHKDVLYVEVEPFSEWVIDASHLKNKEIKLEGVHYTTDLEPFIERKLFSVNSGHAAVAYSSAYKGYKTILEGLQDEEILNILKAVQKETRALLLAKWAQYFKQDELIKYHELIISRFSNPEIIDEVSRVARTPIRKLGYDERFIRPIRELNDRKLSYQNHLDIVGKIFAYHDENDAQAIQLQEKLKITELPMLIEEVTGLSNQKLILEIEKVINHYKK.

An NAD(+)-binding site is contributed by 4–15 (AVHFGAGNIGRG).

Belongs to the mannitol dehydrogenase family.

It carries out the reaction D-mannitol 1-phosphate + NAD(+) = beta-D-fructose 6-phosphate + NADH + H(+). This is Mannitol-1-phosphate 5-dehydrogenase from Lactococcus lactis subsp. lactis (strain IL1403) (Streptococcus lactis).